A 1081-amino-acid chain; its full sequence is Protein QUIRKY (1081 aa).

The C2 1 domain occupies 1-124 (MNTTPFHSDP…SRRGEEGLVY (124 aa)). Disordered regions lie at residues 154 to 198 (DTAG…MNIP) and 238 to 323 (PQHV…MEKK). The segment covering 163–176 (QQQQQQQQFHPPQQ) has biased composition (low complexity). Residues 248-257 (NHPHRNDNHP) are compositionally biased toward basic and acidic residues. Residues 258 to 268 (QRPPSPPPPPS) are compositionally biased toward pro residues. 3 consecutive C2 domains span residues 318–440 (TTME…PQWY), 477–605 (SSDA…SKWH), and 652–778 (VCSD…TNSY). Glu-351, Ser-352, Asp-408, and Ser-413 together coordinate Ca(2+). Helical transmembrane passes span 879-899 (WYRIVGVLAWAVGLAKWLDNI), 916-936 (LVLVWYPDLVVPTAFLYVVMI), and 1024-1044 (LFIAICLVITIVLYAVPAKMV).

Belongs to the MCTP family. As to quaternary structure, interacts with SUB/SCM and POQ at the plasma membrane. Binds to SUB/SCM at plasmodesmata (PD) in root epidermal cells to promote tissue morphogenesis. The cofactor is Ca(2+). In terms of tissue distribution, observed mainly in flowers, and, to a lower extent, in seedlings, roots, shoots, leaves, stems and inflorescences. Expressed in the vascular tissues of roots, cotyledons and rosette leaves. Accumulates in roots meristems.

It is found in the cell membrane. The protein resides in the cytoplasm. It localises to the golgi apparatus membrane. Its subcellular location is the cell junction. The protein localises to the plasmodesma. Functionally, may be involved in Ca 2(+)-dependent signaling and membrane trafficking. Plays a role in fruit dehiscence. Components of the machinery involved in organ development mediated by the receptor-like kinase STRUBBELIG (SUB). Collaboratively with SUB and POQ, regulates cell growth anisotropy during gynoecium development, thus linking together cell-cell communication and cellular growth. Together with SUB/SCM, links RLK-dependent signal transduction and intercellular communication mediated by plasmodesmata (PD) to regulate tissue morphogenesis. May function as a signaling molecule by regulating the trafficking of other regulators. This is Protein QUIRKY from Arabidopsis thaliana (Mouse-ear cress).